The following is a 212-amino-acid chain: Cell division protein SepF (212 aa).

Residues 32-104 (RYADPDTSYD…APLGSDAHRE (73 aa)) form a disordered region. Residues 64-73 (EAEEDGGDYG) show a composition bias toward acidic residues.

Belongs to the SepF family. In terms of assembly, homodimer. Interacts with FtsZ.

The protein resides in the cytoplasm. Cell division protein that is part of the divisome complex and is recruited early to the Z-ring. Probably stimulates Z-ring formation, perhaps through the cross-linking of FtsZ protofilaments. Its function overlaps with FtsA. In Saccharopolyspora erythraea (strain ATCC 11635 / DSM 40517 / JCM 4748 / NBRC 13426 / NCIMB 8594 / NRRL 2338), this protein is Cell division protein SepF.